Here is a 554-residue protein sequence, read N- to C-terminus: Chaperonin GroEL (554 aa).

ATP-binding positions include 29-32 (TLGP), K50, 86-90 (DGTTT), G418, and D499. The segment at 528 to 554 (HEEDNNTNRSGGGVGGGHHGGMGGMDF) is disordered. Gly residues predominate over residues 537 to 554 (SGGGVGGGHHGGMGGMDF).

It belongs to the chaperonin (HSP60) family. Forms a cylinder of 14 subunits composed of two heptameric rings stacked back-to-back. Interacts with the co-chaperonin GroES.

It is found in the cytoplasm. It carries out the reaction ATP + H2O + a folded polypeptide = ADP + phosphate + an unfolded polypeptide.. Together with its co-chaperonin GroES, plays an essential role in assisting protein folding. The GroEL-GroES system forms a nano-cage that allows encapsulation of the non-native substrate proteins and provides a physical environment optimized to promote and accelerate protein folding. This Orientia tsutsugamushi (strain Boryong) (Rickettsia tsutsugamushi) protein is Chaperonin GroEL.